Reading from the N-terminus, the 348-residue chain is Spermatogenesis-associated protein 32 (348 aa).

The segment covering tyrosine 27–aspartate 36 has biased composition (basic and acidic residues). Positions tyrosine 27–proline 61 are disordered. 2 positions are modified to phosphoserine: serine 149 and serine 152. Residues alanine 308–glycine 329 form a disordered region. A Phosphothreonine modification is found at threonine 330.

In terms of assembly, interacts with syntaxin-1 and ACTB. As to expression, abundantly expressed in testes. Expressed in germ cells, but not in Sertoli or Leydig cells of the adult testis. Localized at the acrosomal region of the round and elongated spermatids at stages VIII-X.

This chain is Spermatogenesis-associated protein 32 (Spata32), found in Rattus norvegicus (Rat).